Consider the following 135-residue polypeptide: Beta/delta-urticatoxin-Ui2a (135 aa).

Residues 1–18 (MGAIVLVAIMALVASSSA) form the signal peptide. A propeptide spanning residues 19–72 (FSDDEQNMMNAEGEKGIRSYSAADDVSDMIESLFVNSGNRNLVLMMLSGRPQPN) is cleaved from the precursor. 6 disulfide bridges follow: cysteine 75–cysteine 92, cysteine 82–cysteine 97, cysteine 91–cysteine 105, cysteine 107–cysteine 121, cysteine 114–cysteine 126, and cysteine 120–cysteine 134.

The protein belongs to the urticatoxin-2 family. In terms of tissue distribution, expressed in trichomes, that are stiff epidermal hairs located on the surface of petioles and leaves.

Its subcellular location is the secreted. Functionally, plant defense neurotoxin that causes pain and systemic symptoms in mammals via modulation of voltage-gated sodium channels (Nav). Potent modulator of human Nav1.5/SCN5A (EC(50)=55 nM), Nav1.6/SCN8A (EC(50)=0.86 nM), and Nav1.7/SCN9A (EC(50)=208 nM), where it shifts the activation threshold to more negative potentials and delays fast inactivation. Also shifts the voltage-dependence of steady-state fast inactivation of Nav1.6/SCN8A, but not that of Nav1.5/SCN5A or Nav1.7/SCN9A. On Nav1.7/SCN9A, principally acts by binding to extracellular loops of domain IV (Nav site 3). In vivo, intraplantar injection into mice causes numerous dose-dependent, immediate, and long-lasting spontaneous pain behaviors, while no swelling is observed in the injected paw. At the highest doses tested, systemic symptoms including hypokinesia and hypersalivation are observed. This chain is Beta/delta-urticatoxin-Ui2a, found in Urtica incisa (Scrub nettle).